Consider the following 532-residue polypeptide: Beta-hexosaminidase subunit A1 (532 aa).

Positions 1–18 (MIKKIILFFAVLIAIVIG) are cleaved as a signal peptide. N72 and N79 each carry an N-linked (GlcNAc...) asparagine glycan. E308 functions as the Proton donor in the catalytic mechanism. N350 and N427 each carry an N-linked (GlcNAc...) asparagine glycan.

The protein belongs to the glycosyl hydrolase 20 family. Dimer. Post-translationally, the N-terminus is blocked. In terms of processing, N-glycosylated.

Its subcellular location is the lysosome. The enzyme catalyses Hydrolysis of terminal non-reducing N-acetyl-D-hexosamine residues in N-acetyl-beta-D-hexosaminides.. Responsible for the degradation of GM2 gangliosides, and a variety of other molecules containing terminal N-acetyl hexosamines. This enzyme plays a role during the slug stage of development in the maintenance of pseudoplasmodia of normal size. This is Beta-hexosaminidase subunit A1 (hexa1) from Dictyostelium discoideum (Social amoeba).